We begin with the raw amino-acid sequence, 603 residues long: NADH-ubiquinone oxidoreductase chain 5 (603 aa).

The next 16 membrane-spanning stretches (helical) occupy residues 4–24 (LPTLTLISLIILTSPIMLSPL), 38–58 (MAVSYAFMVSMVPAMIFMHSG), 87–107 (LIFMPVALFVTWSIMEFSLWY), 117–137 (FFKYLLLFLITMIILITANNL), 140–160 (LFIGWEGVGIMSFLLIGWWYG), 171–191 (AMIYNRIGDVGFVAAMAWFLL), 211–233 (LPLTGLLLAAMGKSAQFGLHPWL), 241–261 (TPVSALLHSSTMVVAGVFLLI), 273–293 (ILTLTLCVGAITTLFTAICAL), 301–320 (IIAFSTSSQLGLMMVTIGIN), 331–351 (THAFFKAMLFMCSGSIIHSLG), 366–386 (LPFTTTALIIGSLALTGMPFL), 409–429 (LLITFIATSMTAVYSTRIIFF), 457–477 (LMLGSIFAGFLISSNLPPTTV), 488–508 (FMALAVTLLGFALAIELSSFT), and 583–603 (MIKLYFLSFLISLTLGLLLII).

This sequence belongs to the complex I subunit 5 family.

It is found in the mitochondrion inner membrane. The enzyme catalyses a ubiquinone + NADH + 5 H(+)(in) = a ubiquinol + NAD(+) + 4 H(+)(out). Core subunit of the mitochondrial membrane respiratory chain NADH dehydrogenase (Complex I) that is believed to belong to the minimal assembly required for catalysis. Complex I functions in the transfer of electrons from NADH to the respiratory chain. The immediate electron acceptor for the enzyme is believed to be ubiquinone. This chain is NADH-ubiquinone oxidoreductase chain 5 (MT-ND5), found in Dugong dugon (Dugong).